Consider the following 199-residue polypeptide: Pyrrolidone-carboxylate peptidase (199 aa).

Residues Glu-80, Cys-142, and His-166 contribute to the active site.

The protein belongs to the peptidase C15 family. In terms of assembly, homotetramer.

It is found in the cytoplasm. It carries out the reaction Release of an N-terminal pyroglutamyl group from a polypeptide, the second amino acid generally not being Pro.. Removes 5-oxoproline from various penultimate amino acid residues except L-proline. The protein is Pyrrolidone-carboxylate peptidase of Oceanobacillus iheyensis (strain DSM 14371 / CIP 107618 / JCM 11309 / KCTC 3954 / HTE831).